The following is a 246-amino-acid chain: E3 ubiquitin ligase TRIM40 (246 aa).

The segment at 12-55 adopts an RING-type zinc-finger fold; the sequence is CPICLDPLKEAVSTDCRHLFCRMCLTQHMDKASVSGILSCPVCR. Residues 64–105 form a B box-type zinc finger; sequence GDNYICHTHQKRVRRFCEASGHLLCEECLQSPEHQSHTELSI. The Zn(2+) site is built by C69, H72, C91, and H97. The stretch at 105–170 forms a coiled coil; it reads IENAISHYKE…DQTKEQLKAL (66 aa).

It belongs to the TRIM/RBCC family. Interacts with NEDD8.

The catalysed reaction is S-ubiquitinyl-[E2 ubiquitin-conjugating enzyme]-L-cysteine + [acceptor protein]-L-lysine = [E2 ubiquitin-conjugating enzyme]-L-cysteine + N(6)-ubiquitinyl-[acceptor protein]-L-lysine.. Its function is as follows. E3 ubiquitin-protein ligase that plays a role in the limitation of the innate immune response. Mediates inhibition of the RLR signaling pathway by ubiquitinating RIGI and IFIH1 receptors, leading to their proteasomal degradation. Also promotes the neddylation of IKBKG/NEMO, stabilizing NFKBIA, and thereby inhibiting of NF-kappa-B nuclear translocation and activation. The protein is E3 ubiquitin ligase TRIM40 (Trim40) of Mus musculus (Mouse).